The chain runs to 377 residues: Homoserine O-acetyltransferase (377 aa).

Residues 48-347 (NVVLIEHALT…PVGHDAFLTE (300 aa)) enclose the AB hydrolase-1 domain. Serine 143 (nucleophile) is an active-site residue. Arginine 213 is a substrate binding site. Active-site residues include aspartate 311 and histidine 341. A substrate-binding site is contributed by aspartate 342.

This sequence belongs to the AB hydrolase superfamily. MetX family. As to quaternary structure, homodimer.

The protein resides in the cytoplasm. It catalyses the reaction L-homoserine + acetyl-CoA = O-acetyl-L-homoserine + CoA. It functions in the pathway amino-acid biosynthesis; L-methionine biosynthesis via de novo pathway; O-acetyl-L-homoserine from L-homoserine: step 1/1. Its function is as follows. Transfers an acetyl group from acetyl-CoA to L-homoserine, forming acetyl-L-homoserine. This chain is Homoserine O-acetyltransferase, found in Corynebacterium glutamicum (strain ATCC 13032 / DSM 20300 / JCM 1318 / BCRC 11384 / CCUG 27702 / LMG 3730 / NBRC 12168 / NCIMB 10025 / NRRL B-2784 / 534).